A 261-amino-acid chain; its full sequence is Small ribosomal subunit protein eS1 (261 aa).

Positions 1 to 18 (MAVGKNKRISKGKKGGKK) are enriched in basic residues. The tract at residues 1–20 (MAVGKNKRISKGKKGGKKKA) is disordered.

It belongs to the eukaryotic ribosomal protein eS1 family. As to quaternary structure, component of the small ribosomal subunit. Mature ribosomes consist of a small (40S) and a large (60S) subunit. The 40S subunit contains about 33 different proteins and 1 molecule of RNA (18S). The 60S subunit contains about 49 different proteins and 3 molecules of RNA (25S, 5.8S and 5S).

It is found in the cytoplasm. This Catharanthus roseus (Madagascar periwinkle) protein is Small ribosomal subunit protein eS1.